The chain runs to 343 residues: DNA repair and recombination protein RadA (343 aa).

107 to 114 (GEFGAGKS) is an ATP binding site.

This sequence belongs to the eukaryotic RecA-like protein family.

Its function is as follows. Involved in DNA repair and in homologous recombination. Binds and assemble on single-stranded DNA to form a nucleoprotein filament. Hydrolyzes ATP in a ssDNA-dependent manner and promotes DNA strand exchange between homologous DNA molecules. This is DNA repair and recombination protein RadA from Haloquadratum walsbyi (strain DSM 16790 / HBSQ001).